A 584-amino-acid polypeptide reads, in one-letter code: Long-chain-fatty-acid--AMP ligase FadD26 (584 aa).

It belongs to the ATP-dependent AMP-binding enzyme family.

It catalyses the reaction holo-[(phenol)carboxyphthiodiolenone synthase] + a long-chain fatty acid + ATP = a long-chain fatty acyl-[(phenol)carboxyphthiodiolenone synthase] + AMP + diphosphate. The catalysed reaction is eicosanoate + holo-[(phenol)carboxyphthiodiolenone synthase] + ATP = icosanoyl-[(phenol)carboxyphthiodiolenone synthase] + AMP + diphosphate. It carries out the reaction holo-[(phenol)carboxyphthiodiolenone synthase] + docosanoate + ATP = docosanoyl-[(phenol)carboxyphthiodiolenone synthase] + AMP + diphosphate. It participates in lipid metabolism; fatty acid biosynthesis. Catalyzes the activation of long-chain fatty acids as acyl-adenylates (acyl-AMP), which are then transferred to the multifunctional polyketide synthase PpsA for further chain extension. Catalyzes the adenylation of the long-chain fatty acids eicosanoate (C20) or docosanoate (C22), and potentially the very-long-chain fatty acid lignocerate (C24). Involved in the biosynthesis of phthiocerol dimycocerosate (DIM A) and phthiodiolone dimycocerosate (DIM B). This Mycobacterium marinum (strain ATCC BAA-535 / M) protein is Long-chain-fatty-acid--AMP ligase FadD26.